A 513-amino-acid chain; its full sequence is ATP synthase subunit alpha (513 aa).

169-176 (GDRQTGKT) serves as a coordination point for ATP.

The protein belongs to the ATPase alpha/beta chains family. As to quaternary structure, F-type ATPases have 2 components, CF(1) - the catalytic core - and CF(0) - the membrane proton channel. CF(1) has five subunits: alpha(3), beta(3), gamma(1), delta(1), epsilon(1). CF(0) has three main subunits: a(1), b(2) and c(9-12). The alpha and beta chains form an alternating ring which encloses part of the gamma chain. CF(1) is attached to CF(0) by a central stalk formed by the gamma and epsilon chains, while a peripheral stalk is formed by the delta and b chains.

It localises to the cell inner membrane. It carries out the reaction ATP + H2O + 4 H(+)(in) = ADP + phosphate + 5 H(+)(out). In terms of biological role, produces ATP from ADP in the presence of a proton gradient across the membrane. The alpha chain is a regulatory subunit. The polypeptide is ATP synthase subunit alpha (Bordetella pertussis (strain Tohama I / ATCC BAA-589 / NCTC 13251)).